The primary structure comprises 588 residues: MNKSRQKELTRWLKQQSVISQRWLNISRLLGFVSGILIIAQAWFMARILQHMIMENIPREALLLPFTLLVLTFVLRAWVVWLRERVGYHAGQHIRFAIRRQVLDRLQQAGPAWIQGKPAGSWATLVLEQIDDMHDYYARYLPQMALAVSVPLLIVVAIFPSNWAAALILLGTAPLIPLFMALVGMGAADANRRNFLALARLSGHFLDRLRGMETLRIFGRGEAEIESIRSASEDFRQRTMEVLRLAFLSSGILEFFTSLSIALVAVYFGFSYLGELDFGHYDTGVTLAAGFLALILAPEFFQPLRDLGTFYHAKAQAVGAADSLKTFMETPLAHPQRGEAELASTDPVTIEAEELFITSPEGKTLAGPLNFTLPAGQRAVLVGRSGSGKSSLLNALSGFLSYQGSLRINGIELRDLSPESWRKHLSWVGQNPQLPAATLRDNVLLARPDASEQELQAALDNAWVSEFLPLLPQGVDTPVGDQAARLSVGQAQRVAVARALLNPCSLLLLDEPAASLDAHSEQRVMEALNAASLRQTTLMVTHQLEDLADWDVIWVMQDGRIIEQGRYAELSVAGGPFATLLAHRQEEI.

At 1–15 (MNKSRQKELTRWLKQ) the chain is on the cytoplasmic side. 2 helical membrane passes run 16 to 36 (QSVISQRWLNISRLLGFVSGI) and 37 to 57 (LIIAQAWFMARILQHMIMENI). The region spanning 20-306 (SQRWLNISRL…APEFFQPLRD (287 aa)) is the ABC transmembrane type-1 domain. The Cytoplasmic portion of the chain corresponds to 58 to 136 (PREALLLPFT…LEQIDDMHDY (79 aa)). A helical transmembrane segment spans residues 137-157 (YARYLPQMALAVSVPLLIVVA). Topologically, residues 158–161 (IFPS) are periplasmic. The helical transmembrane segment at 162-182 (NWAAALILLGTAPLIPLFMAL) threads the bilayer. The Cytoplasmic portion of the chain corresponds to 183–249 (VGMGAADANR…MEVLRLAFLS (67 aa)). The helical transmembrane segment at 250–270 (SGILEFFTSLSIALVAVYFGF) threads the bilayer. Topologically, residues 271–276 (SYLGEL) are periplasmic. Residues 277 to 297 (DFGHYDTGVTLAAGFLALILA) form a helical membrane-spanning segment. The Cytoplasmic portion of the chain corresponds to 298–573 (PEFFQPLRDL…QGRYAELSVA (276 aa)). One can recognise an ABC transporter domain in the interval 339-572 (EAELASTDPV…EQGRYAELSV (234 aa)). Position 373–380 (373–380 (LPAGQRAV)) interacts with ATP.

It belongs to the ABC transporter superfamily. Cysteine exporter (TC 3.A.1.129.1) family. Forms a heterodimer with CydC.

The protein localises to the cell inner membrane. The catalysed reaction is L-cysteine(in) + ATP + H2O = L-cysteine(out) + ADP + phosphate + H(+). The enzyme catalyses glutathione(in) + ATP + H2O = glutathione(out) + ADP + phosphate + H(+). Its activity is regulated as follows. ATPase activity is stimulated by various thiol compounds. The presence of heme leads to a further enhancement of thiol-stimulated ATPase activity, although a large excess of heme inhibits activity. Glutathione transport is inhibited by sodium orthovanadate, an inhibitor of ABC-type transport systems, but not by the proton ionophore carbonyl cyanide m-chlorophenylhydrazone (CCCP). Its function is as follows. Part of the ABC transporter complex CydDC that exports the reduced low-molecular-weight thiols cysteine and glutathione to the periplasm. Export of these thiol-containing redox-active molecules may be crucial for redox homeostasis in the periplasm, permitting correct assembly of various respiratory complexes and formation of correct disulfide bonds in periplasmic and secreted proteins. CydD contains transmembrane domains (TMD), which form a pore in the inner membrane, and an ATP-binding domain (NBD), which is responsible for energy generation. Required for the assembly of functional cytochrome bd-type quinol oxidases and periplasmic c-type cytochromes. Overexpression of CydDC under anaerobic conditions also results in the formation of a heme biosynthesis-derived pigment, P-574. CydDC binds heme b, but heme is probably not transported by the complex and instead has a role in regulating ATPase activity. Functionally, conversely, a more recent study suggests an alternative function of CydDC: authors suggest that CydDC does not mediate the export of L-cysteine but rather reduces cytoplasmic L-cystine to L-cysteine. The principle function of CydDC would be to maintain the reduced state of cytoplasmic L-cysteine, thereby providing an important connection between sulfur metabolism, oxidative stress and resistance to antibiotics. The protein is Glutathione/L-cysteine transport system ATP-binding/permease protein CydD of Escherichia coli (strain K12).